The sequence spans 715 residues: Putative macrophage stimulating 1-like protein (715 aa).

Positions Met-1–Ser-20 are cleaved as a signal peptide. One can recognise a PAN domain in the interval Gln-21–Gly-110. Kringle domains follow at residues Gly-63–Cys-156, Ala-160–Cys-238, Ser-252–Cys-345, and Asp-353–Cys-464. 12 disulfide bridges follow: Cys-127–Cys-151, Cys-161–Cys-238, Cys-182–Cys-221, Cys-210–Cys-233, Cys-253–Cys-345, Cys-316–Cys-339, Cys-354–Cys-464, Cys-375–Cys-447, Cys-511–Cys-527, Cys-606–Cys-671, Cys-636–Cys-650, and Cys-661–Cys-689. Residues Val-488–Arg-713 enclose the Peptidase S1 domain.

Belongs to the peptidase S1 family. Plasminogen subfamily.

The protein localises to the secreted. The chain is Putative macrophage stimulating 1-like protein (MST1L) from Homo sapiens (Human).